Consider the following 388-residue polypeptide: Succinate--CoA ligase [ADP-forming] subunit beta (388 aa).

The region spanning 9-244 (KQLFAEFGLP…PSQEDKREAH (236 aa)) is the ATP-grasp domain. Residues lysine 46, 53-55 (GRG), glutamate 99, serine 102, and glutamate 107 contribute to the ATP site. 2 residues coordinate Mg(2+): asparagine 199 and aspartate 213. Residues asparagine 264 and 321 to 323 (GIV) each bind substrate.

Belongs to the succinate/malate CoA ligase beta subunit family. In terms of assembly, heterotetramer of two alpha and two beta subunits. Mg(2+) serves as cofactor.

The catalysed reaction is succinate + ATP + CoA = succinyl-CoA + ADP + phosphate. It catalyses the reaction GTP + succinate + CoA = succinyl-CoA + GDP + phosphate. The protein operates within carbohydrate metabolism; tricarboxylic acid cycle; succinate from succinyl-CoA (ligase route): step 1/1. In terms of biological role, succinyl-CoA synthetase functions in the citric acid cycle (TCA), coupling the hydrolysis of succinyl-CoA to the synthesis of either ATP or GTP and thus represents the only step of substrate-level phosphorylation in the TCA. The beta subunit provides nucleotide specificity of the enzyme and binds the substrate succinate, while the binding sites for coenzyme A and phosphate are found in the alpha subunit. The protein is Succinate--CoA ligase [ADP-forming] subunit beta of Vibrio vulnificus (strain YJ016).